We begin with the raw amino-acid sequence, 102 residues long: Large ribosomal subunit protein bL21 (102 aa).

It belongs to the bacterial ribosomal protein bL21 family. As to quaternary structure, part of the 50S ribosomal subunit. Contacts protein L20.

Functionally, this protein binds to 23S rRNA in the presence of protein L20. In Nocardioides sp. (strain ATCC BAA-499 / JS614), this protein is Large ribosomal subunit protein bL21.